Consider the following 392-residue polypeptide: Acetyl-CoA acetyltransferase (392 aa).

Cys87 (acyl-thioester intermediate) is an active-site residue. Catalysis depends on proton acceptor residues His348 and Cys378.

It belongs to the thiolase-like superfamily. Thiolase family.

The protein resides in the cytoplasm. It catalyses the reaction 2 acetyl-CoA = acetoacetyl-CoA + CoA. It participates in metabolic intermediate biosynthesis; (R)-mevalonate biosynthesis; (R)-mevalonate from acetyl-CoA: step 1/3. Functionally, involved in the production of polyhydroxyalkonic acids (PHAs), composed primarily of 3-hydroxybutyric acid (3HB) and 3-hydroxyvaleric acid (3HV). The protein is Acetyl-CoA acetyltransferase (phaA) of Chromobacterium violaceum (strain ATCC 12472 / DSM 30191 / JCM 1249 / CCUG 213 / NBRC 12614 / NCIMB 9131 / NCTC 9757 / MK).